A 130-amino-acid chain; its full sequence is Small ribosomal subunit protein uS9 (130 aa).

A disordered region spans residues 104–130 (LTRDPRMKERRKYGLKKARKAPQFSKR). Residues 111-130 (KERRKYGLKKARKAPQFSKR) show a composition bias toward basic residues.

This sequence belongs to the universal ribosomal protein uS9 family.

In Moorella thermoacetica (strain ATCC 39073 / JCM 9320), this protein is Small ribosomal subunit protein uS9.